The primary structure comprises 493 residues: Protein nucleotidyltransferase YdiU (493 aa).

The ATP site is built by Gly96, Gly98, Arg99, Lys119, Asp131, Gly132, Arg182, and Arg189. Residue Asp258 is the Proton acceptor of the active site. Positions 259 and 268 each coordinate Mg(2+). Asp268 contributes to the ATP binding site. The segment at 471–493 (EKYTEFKNPPAPKERVSQTFCGT) is disordered.

This sequence belongs to the SELO family. Mg(2+) is required as a cofactor. It depends on Mn(2+) as a cofactor.

The enzyme catalyses L-seryl-[protein] + ATP = 3-O-(5'-adenylyl)-L-seryl-[protein] + diphosphate. The catalysed reaction is L-threonyl-[protein] + ATP = 3-O-(5'-adenylyl)-L-threonyl-[protein] + diphosphate. It catalyses the reaction L-tyrosyl-[protein] + ATP = O-(5'-adenylyl)-L-tyrosyl-[protein] + diphosphate. It carries out the reaction L-histidyl-[protein] + UTP = N(tele)-(5'-uridylyl)-L-histidyl-[protein] + diphosphate. The enzyme catalyses L-seryl-[protein] + UTP = O-(5'-uridylyl)-L-seryl-[protein] + diphosphate. The catalysed reaction is L-tyrosyl-[protein] + UTP = O-(5'-uridylyl)-L-tyrosyl-[protein] + diphosphate. Functionally, nucleotidyltransferase involved in the post-translational modification of proteins. It can catalyze the addition of adenosine monophosphate (AMP) or uridine monophosphate (UMP) to a protein, resulting in modifications known as AMPylation and UMPylation. The polypeptide is Protein nucleotidyltransferase YdiU (Nitrosococcus oceani (strain ATCC 19707 / BCRC 17464 / JCM 30415 / NCIMB 11848 / C-107)).